The primary structure comprises 145 residues: Large ribosomal subunit protein uL15 (145 aa).

A disordered region spans residues Met1–Gln55. Residues Gly12–Gly21 show a composition bias toward basic residues. The span at Arg22–Ala32 shows a compositional bias: gly residues.

The protein belongs to the universal ribosomal protein uL15 family. Part of the 50S ribosomal subunit.

Its function is as follows. Binds to the 23S rRNA. The protein is Large ribosomal subunit protein uL15 of Bdellovibrio bacteriovorus (strain ATCC 15356 / DSM 50701 / NCIMB 9529 / HD100).